We begin with the raw amino-acid sequence, 323 residues long: Transcription factor LUX (323 aa).

Disordered regions lie at residues 1–25 (MGEE…WEMG), 53–139 (ERSR…DLSG), and 267–298 (GYHH…ESNP). Over residues 65–87 (SETTLSSLRGGSSGPNTSSSNNN) the composition is skewed to low complexity. Residues 139–200 (GKTLKRPRLV…HLQKYRLYLK (62 aa)) constitute a DNA-binding region (myb-like GARP).

Interacts with ELF3 and forms a complex with ELF3 and ELF4.

The protein localises to the nucleus. Its function is as follows. Transcription factor that is essential for the generation of the circadian clock oscillation. Is necessary for activation of CCA1 and LHY expression. Is coregulated with TOC1 and seems to be repressed by CCA1 and LHY by direct binding of these proteins to the evening element in the LUX promoter. Directly regulates the expression of PRR9, a major component of the morning transcriptional feedback circuit, by binding specific sites on PRR9 promoter. Binds to its own promoter, inducing a negative auto-regulatory feedback loop within the core clock. Binds to ELF3 and associates with ELF4 in a diurnal complex which is required for the expression of the growth-promoting transcription factors PIF4 and PIF5 and subsequent hypocotyl growth in the early evening. This is Transcription factor LUX (LUX) from Arabidopsis thaliana (Mouse-ear cress).